The following is a 151-amino-acid chain: 3-hydroxyacyl-[acyl-carrier-protein] dehydratase FabZ (151 aa).

The active site involves His54.

It belongs to the thioester dehydratase family. FabZ subfamily.

It localises to the cytoplasm. The enzyme catalyses a (3R)-hydroxyacyl-[ACP] = a (2E)-enoyl-[ACP] + H2O. Its function is as follows. Involved in unsaturated fatty acids biosynthesis. Catalyzes the dehydration of short chain beta-hydroxyacyl-ACPs and long chain saturated and unsaturated beta-hydroxyacyl-ACPs. The chain is 3-hydroxyacyl-[acyl-carrier-protein] dehydratase FabZ from Blochmanniella pennsylvanica (strain BPEN).